We begin with the raw amino-acid sequence, 1847 residues long: Replication factor C small subunit (1847 aa).

3 DOD-type homing endonuclease domains span residues 179–311 (WLGY…RFGI), 780–927 (MLGL…ISGI), and 1348–1508 (LLGF…EFEV).

This sequence belongs to the activator 1 small subunits family. RfcS subfamily. Heteromultimer composed of small subunits (RfcS) and large subunits (RfcL). In terms of processing, this protein undergoes a protein self splicing that involves a post-translational excision of the intervening region (intein) followed by peptide ligation.

In terms of biological role, part of the RFC clamp loader complex which loads the PCNA sliding clamp onto DNA. This is Replication factor C small subunit (rfcS) from Methanocaldococcus jannaschii (strain ATCC 43067 / DSM 2661 / JAL-1 / JCM 10045 / NBRC 100440) (Methanococcus jannaschii).